Here is a 148-residue protein sequence, read N- to C-terminus: MQTAHTGLSHTADGADGQTSRCCPGNAGTKAVIPSGAHPVARALEASRNSSKSMVPLTQRPGTRHHRFSLFVPFPTSLEAEIACGSLVPDVEPHRGLVGKELKVSGCMLEVRWIAEDSRLLRLSIINFLDQLSLVVNTIQLFGPPVSC.

The tract at residues 1–21 (MQTAHTGLSHTADGADGQTSR) is disordered.

Belongs to the CTAG/PCC1 family. Component of the EKC/KEOPS complex composed of at least GON7, TP53RK, TPRKB, OSGEP and LAGE3; the whole complex dimerizes.

The protein resides in the cytoplasm. It is found in the nucleus. Its function is as follows. Component of the EKC/KEOPS complex that is required for the formation of a threonylcarbamoyl group on adenosine at position 37 (t(6)A37) in tRNAs that read codons beginning with adenine. The complex is probably involved in the transfer of the threonylcarbamoyl moiety of threonylcarbamoyl-AMP (TC-AMP) to the N6 group of A37. LAGE3 functions as a dimerization module for the complex. This is EKC/KEOPS complex subunit Lage3 from Mus musculus (Mouse).